Reading from the N-terminus, the 131-residue chain is Small ribosomal subunit protein uS11 (131 aa).

It belongs to the universal ribosomal protein uS11 family. In terms of assembly, part of the 30S ribosomal subunit. Interacts with proteins S7 and S18. Binds to IF-3.

Located on the platform of the 30S subunit, it bridges several disparate RNA helices of the 16S rRNA. Forms part of the Shine-Dalgarno cleft in the 70S ribosome. The chain is Small ribosomal subunit protein uS11 from Buchnera aphidicola subsp. Acyrthosiphon pisum (strain 5A).